A 238-amino-acid polypeptide reads, in one-letter code: Endonuclease V (238 aa).

The Mg(2+) site is built by aspartate 46 and aspartate 116.

It belongs to the endonuclease V family. The cofactor is Mg(2+).

It is found in the cytoplasm. The enzyme catalyses Endonucleolytic cleavage at apurinic or apyrimidinic sites to products with a 5'-phosphate.. DNA repair enzyme involved in the repair of deaminated bases. Selectively cleaves double-stranded DNA at the second phosphodiester bond 3' to a deoxyinosine leaving behind the intact lesion on the nicked DNA. This chain is Endonuclease V, found in Bacillus velezensis (strain DSM 23117 / BGSC 10A6 / LMG 26770 / FZB42) (Bacillus amyloliquefaciens subsp. plantarum).